Consider the following 468-residue polypeptide: MFTAPGVAATRERPYSCSVCGKSFQYSAVLLRHERAHGGDKRFRCLECGERCARASDLRVHRWTHAGQTLYICSECGQSFSHSSLLDLHLGTHRRRSSTCPCRLCGRRFPHVSALLLHRVRQHPPEKPHRCPLCARSFRQSALPFHLARAHPPETTIATAPAPSTLYHCTQCPRAFHSSAGLRNHSRIHVVPSLSDPGAEAHRCGVCGKSFSKSSTLTRHLQRHSGEKPFKCPECGKGFLESATLVRHQRTHTGEKPYACNDCGRCFSESSTLLRHQRSHQGERPHICATCGKGFGQRYDLVVHQRSHTGERPFPCPECGRGFTDRSDLTKHLRTHTGEKPYHCELCGKRFTCISNLNVHLRNHAGHKPHKCPECGKSFSVASKLALHRKTHLGERTAECTECGKFFSHGRSLSQHQRSHRRARAAAMAATTTTTVVTEMTIGPSLTLTGPTEQEKSGLLVSTFQETC.

4 C2H2-type zinc fingers span residues 15–37 (YSCSVCGKSFQYSAVLLRHERAH), 43–65 (FRCLECGERCARASDLRVHRWTH), 71–93 (YICSECGQSFSHSSLLDLHLGTH), and 100–123 (CPCRLCGRRFPHVSALLLHRVRQH). The segment at 129 to 151 (HRCPLCARSFRQSALPFHLARAH) adopts a C2H2-type 5; degenerate zinc-finger fold. C2H2-type zinc fingers lie at residues 167 to 189 (YHCTQCPRAFHSSAGLRNHSRIH), 202 to 224 (HRCGVCGKSFSKSSTLTRHLQRH), 230 to 252 (FKCPECGKGFLESATLVRHQRTH), 258 to 280 (YACNDCGRCFSESSTLLRHQRSH), 286 to 308 (HICATCGKGFGQRYDLVVHQRSH), 314 to 336 (FPCPECGRGFTDRSDLTKHLRTH), 342 to 364 (YHCELCGKRFTCISNLNVHLRNH), 370 to 392 (HKCPECGKSFSVASKLALHRKTH), and 398 to 420 (AECTECGKFFSHGRSLSQHQRSH).

Belongs to the krueppel C2H2-type zinc-finger protein family.

It is found in the nucleus. Its function is as follows. May be involved in transcriptional regulation. The polypeptide is Zinc finger protein 672 (Znf672) (Rattus norvegicus (Rat)).